Here is a 78-residue protein sequence, read N- to C-terminus: Signal peptidase complex subunit 1 (78 aa).

The Cytoplasmic segment spans residues 1-18 (MNYLEGTIDFAGQLRCQK). Residues 19 to 38 (YMNYGLCTSAVISYIYGYLV) traverse the membrane as a helical segment. Residues 39–42 (QDSY) are Lumenal-facing. Residues 43-63 (CVIKLFLILASLVALVCLPAW) traverse the membrane as a helical segment. Residues 64 to 78 (SMYNKNPLKFQKKKE) lie on the Cytoplasmic side of the membrane.

Belongs to the SPCS1 family. In terms of assembly, component of the signal peptidase complex (SPC) composed of a catalytic subunit sec11 and three accessory subunits spc1, spc2 and spc3. The complex induces a local thinning of the ER membrane which is used to measure the length of the signal peptide (SP) h-region of protein substrates. This ensures the selectivity of the complex towards h-regions shorter than 18-20 amino acids. SPC associates with the translocon complex.

The protein localises to the endoplasmic reticulum membrane. Component of the signal peptidase complex (SPC) which catalyzes the cleavage of N-terminal signal sequences from nascent proteins as they are translocated into the lumen of the endoplasmic reticulum. Dispensable for SPC enzymatic activity. The protein is Signal peptidase complex subunit 1 of Schizosaccharomyces pombe (strain 972 / ATCC 24843) (Fission yeast).